A 361-amino-acid chain; its full sequence is Pyruvate dehydrogenase E1 component subunit beta, mitochondrial (361 aa).

The N-terminal 27 residues, 1–27 (MAVNGCMRLLRNGLTSACALEQSVRRL), are a transit peptide targeting the mitochondrion. Glu90 contacts thiamine diphosphate. The K(+) site is built by Ile143, Ala191, Val192, Asp194, and Asn196.

Heterotetramer of two PDHA1 and two PDHB subunits. The heterotetramer interacts with DLAT, and is part of the multimeric pyruvate dehydrogenase complex that contains multiple copies of pyruvate dehydrogenase (E1), dihydrolipoamide acetyltransferase (DLAT, E2) and lipoamide dehydrogenase (DLD, E3). Requires thiamine diphosphate as cofactor.

Its subcellular location is the mitochondrion matrix. It catalyses the reaction N(6)-[(R)-lipoyl]-L-lysyl-[protein] + pyruvate + H(+) = N(6)-[(R)-S(8)-acetyldihydrolipoyl]-L-lysyl-[protein] + CO2. Its function is as follows. The pyruvate dehydrogenase complex catalyzes the overall conversion of pyruvate to acetyl-CoA and CO(2), and thereby links the glycolytic pathway to the tricarboxylic cycle. This is Pyruvate dehydrogenase E1 component subunit beta, mitochondrial from Ascaris suum (Pig roundworm).